The sequence spans 551 residues: Scaffold protein OPG125 (551 aa).

Belongs to the orthopoxvirus protein OPG125 family. In terms of assembly, homotrimer. Self-assembles to form a layer. Interacts with OPG158 (via N-terminus); this interaction is necessary for OPG125 association with membranes.

The protein localises to the membrane. Functionally, scaffold protein which forms a transitory spherical honeycomb lattice providing curvature and rigidity to the convex membrane of crescent and immature virions (IV). This association occurs concomitantly with viral membrane formation. Targeted by the drug rifampicin, which prevents the formation of this lattice, and hence virus morphogenesis. In the presence of rifampicin, irregularly shaped membranes that lack the honeycomb layer accumulate around areas of electron-dense viroplasm. This layer is lost from virions during maturation from IV to mature virion (MV), through the proteolysis of OPG158 N-terminus. This Vaccinia virus (strain Ankara) (VACV) protein is Scaffold protein OPG125 (OPG125).